We begin with the raw amino-acid sequence, 360 residues long: Phospho-N-acetylmuramoyl-pentapeptide-transferase (360 aa).

10 helical membrane-spanning segments follow: residues 26–46 (GVLA…FFIA), 70–90 (GTPT…TLLW), 94–114 (GNPL…IGFV), 136–156 (LQSL…SNPV), 164–184 (FIPH…YFVI), 199–219 (GLAI…AYVS), 236–256 (SGQM…FLWF), 263–283 (VFMG…VAIV), 289–309 (VLFI…IQVV), and 339–359 (AVRF…SLKI).

Belongs to the glycosyltransferase 4 family. MraY subfamily. Mg(2+) is required as a cofactor.

The protein resides in the cell inner membrane. It catalyses the reaction UDP-N-acetyl-alpha-D-muramoyl-L-alanyl-gamma-D-glutamyl-meso-2,6-diaminopimeloyl-D-alanyl-D-alanine + di-trans,octa-cis-undecaprenyl phosphate = di-trans,octa-cis-undecaprenyl diphospho-N-acetyl-alpha-D-muramoyl-L-alanyl-D-glutamyl-meso-2,6-diaminopimeloyl-D-alanyl-D-alanine + UMP. The protein operates within cell wall biogenesis; peptidoglycan biosynthesis. Catalyzes the initial step of the lipid cycle reactions in the biosynthesis of the cell wall peptidoglycan: transfers peptidoglycan precursor phospho-MurNAc-pentapeptide from UDP-MurNAc-pentapeptide onto the lipid carrier undecaprenyl phosphate, yielding undecaprenyl-pyrophosphoryl-MurNAc-pentapeptide, known as lipid I. The chain is Phospho-N-acetylmuramoyl-pentapeptide-transferase from Acidithiobacillus ferrooxidans (strain ATCC 23270 / DSM 14882 / CIP 104768 / NCIMB 8455) (Ferrobacillus ferrooxidans (strain ATCC 23270)).